A 599-amino-acid chain; its full sequence is Calmodulin-binding protein 60 E (599 aa).

The tract at residues 1–21 is disordered; it reads MNKRGYECSQEDTDKLPESKR. Residues 1-80 are calmodulin-binding; it reads MNKRGYECSQ…LTSRSPEPKR (80 aa). A DNA-binding region spans residues 150-273; it reads EDDEDWTREH…VLHKKLLKAN (124 aa).

Belongs to the plant ACBP60 protein family. In terms of assembly, interacts with calmodulin (CaM).

The protein resides in the nucleus. Its function is as follows. Transcription activator that binds DNA in a sequence-specific manner, likely 5'-GAAATTTTGG-3', to promote the expression of target genes. The sequence is that of Calmodulin-binding protein 60 E from Arabidopsis thaliana (Mouse-ear cress).